Reading from the N-terminus, the 567-residue chain is Phenylalanine--tRNA ligase beta subunit (567 aa).

Positions 287 to 362 (YFQEEVEFNV…IGEGLASFHP (76 aa)) constitute a B5 domain. Residues Asp-340, Asp-346, Glu-349, and Asp-350 each coordinate Mg(2+).

This sequence belongs to the phenylalanyl-tRNA synthetase beta subunit family. Type 2 subfamily. As to quaternary structure, tetramer of two alpha and two beta subunits. The cofactor is Mg(2+).

It is found in the cytoplasm. It carries out the reaction tRNA(Phe) + L-phenylalanine + ATP = L-phenylalanyl-tRNA(Phe) + AMP + diphosphate + H(+). The polypeptide is Phenylalanine--tRNA ligase beta subunit (Borreliella afzelii (strain PKo) (Borrelia afzelii)).